The following is a 1100-amino-acid chain: MAEQTQLAPAAFHLPDLVAIQRNSFRWFLEEGLIEELESFSPITDYTGKLELHFLGKQYKLKRPKYDVDEAKRRDGTYSVQMYVPTRLINKETGEIKEQEVFIGDLPLMTDRGTFIINGAERVIVNQIVRSPGVYYKSERDKNGRLTHNASLIPNRGAWLKFETDKNGLVWVRIDKTRKLSAQVLLKALGLSDNEIYDKLRHPEYYQKTIDKEGQFSEDEALMELYRKLRPGEPPTVSGGQQLLESRFFDPKRYDLGRVGRYKLNKKLGLNVADTVRTLTSEDILAAIDYLINLELDLGGCEVDDIDHLGNRRVRSVGELLQNQVRVGLNRLERIIRERMTVSDSDSLSPASLVNPKPLVAAIKEFFGSSQLSQFMDQTNPLAELTHKRRLSALGPGGLTRERAGFAVRDIHPSHYGRICPIETPEGPNAGLIGSLATHARVNDYGFIETPFWRVEEGRVRKDLAPVYMTADQEDDLRVAPGDVATDDAGYILGTTIPVRYRQDFTTTTPERVDYVALSPVQIISVATSLIPFLEHDDANRALMSSNMQRQAVPLLRPERPLVGTGLEPQAARDSGMVITSPVDGTISYVDATHIEVTADTGEKYGYALQKYQRSNQDTCLNQRPIVFEGDRGQRGQVIADGSATEKGELALGQNILVAYMPWEGYNYEDAILISERLVYDDVYTSIHIEKFEIEARQTKLGPEEITREIPNVGEDALRQLDENGIIRVGAWVESGDILVGKVTPKGESDQPPEEKLLRAIFGEKARDVRDNSLRVPNGEKGRVVDVRLFTREQGDELPPGANMVVRVYVAQKRKIQVGDKMAGRHGNKGIISRILPCEDMPYLPDGTPLDIVLNPLGVPSRMNVGQVFECMLGWAGQLLDARFKVTPFDEMYGAEASRLTVNAKLSEAREQTGQPWVFSDDEPGKIQVYDGRTGEPFDRPVTVGRAYMLKLVHLVDDKIHARSTGPYSLVTQQPLGGKAQQGGQRFGEMEVWALEAYGAAYILQELLTVKSDDMQGRNEALNAIVKGKAIPRPGTPESFKVLMRELQSLCLDIAVYKASTEDYEEDKEVDLMADVNQRRTPSRPTYESMSVGDIDDDDD.

The interval 1064-1100 (YEEDKEVDLMADVNQRRTPSRPTYESMSVGDIDDDDD) is disordered. Polar residues predominate over residues 1079-1089 (RRTPSRPTYES).

Belongs to the RNA polymerase beta chain family. In cyanobacteria the RNAP catalytic core is composed of 2 alpha, 1 beta, 1 beta', 1 gamma and 1 omega subunit. When a sigma factor is associated with the core the holoenzyme is formed, which can initiate transcription.

The catalysed reaction is RNA(n) + a ribonucleoside 5'-triphosphate = RNA(n+1) + diphosphate. In terms of biological role, DNA-dependent RNA polymerase catalyzes the transcription of DNA into RNA using the four ribonucleoside triphosphates as substrates. In Synechococcus sp. (strain ATCC 27144 / PCC 6301 / SAUG 1402/1) (Anacystis nidulans), this protein is DNA-directed RNA polymerase subunit beta.